The chain runs to 203 residues: Pectinesterase inhibitor 12 (203 aa).

Residues 1–26 form the signal peptide; it reads MRMSKALAAVVAISVSLSAAAMGVDA. Disulfide bonds link C32-C47 and C100-C140.

This sequence belongs to the PMEI family.

It localises to the secreted. It is found in the extracellular space. The protein localises to the apoplast. In terms of biological role, pectin methylesterase (PME) inhibitor that inhibits PME in vitro. The sequence is that of Pectinesterase inhibitor 12 from Oryza sativa subsp. japonica (Rice).